We begin with the raw amino-acid sequence, 388 residues long: 1-deoxy-D-xylulose 5-phosphate reductoisomerase (388 aa).

The NADPH site is built by threonine 13, glycine 14, serine 15, isoleucine 16, arginine 40, asparagine 41, and asparagine 124. Lysine 125 lines the 1-deoxy-D-xylulose 5-phosphate pocket. Residue glutamate 126 participates in NADPH binding. Position 150 (aspartate 150) interacts with Mn(2+). Residues serine 151, glutamate 152, serine 176, and histidine 199 each contribute to the 1-deoxy-D-xylulose 5-phosphate site. A Mn(2+)-binding site is contributed by glutamate 152. Residue glycine 205 coordinates NADPH. Residues serine 212, asparagine 217, lysine 218, and glutamate 221 each coordinate 1-deoxy-D-xylulose 5-phosphate. Glutamate 221 contacts Mn(2+).

It belongs to the DXR family. As to quaternary structure, homodimer. The cofactor is Mg(2+). Mn(2+) is required as a cofactor. It depends on Co(2+) as a cofactor.

The enzyme catalyses 2-C-methyl-D-erythritol 4-phosphate + NADP(+) = 1-deoxy-D-xylulose 5-phosphate + NADPH + H(+). It participates in isoprenoid biosynthesis; isopentenyl diphosphate biosynthesis via DXP pathway; isopentenyl diphosphate from 1-deoxy-D-xylulose 5-phosphate: step 1/6. With respect to regulation, competitively inhibited by the antibiotic fosmidomycin. Its function is as follows. Catalyzes the NADPH-dependent rearrangement and reduction of 1-deoxy-D-xylulose-5-phosphate (DXP) to 2-C-methyl-D-erythritol 4-phosphate (MEP). Cannot use NADH instead of NADPH as the reducing agent. In Zymomonas mobilis subsp. mobilis (strain ATCC 31821 / ZM4 / CP4), this protein is 1-deoxy-D-xylulose 5-phosphate reductoisomerase.